The primary structure comprises 113 residues: Large ribosomal subunit protein uL22 (113 aa).

This sequence belongs to the universal ribosomal protein uL22 family. Part of the 50S ribosomal subunit.

In terms of biological role, this protein binds specifically to 23S rRNA; its binding is stimulated by other ribosomal proteins, e.g. L4, L17, and L20. It is important during the early stages of 50S assembly. It makes multiple contacts with different domains of the 23S rRNA in the assembled 50S subunit and ribosome. Its function is as follows. The globular domain of the protein is located near the polypeptide exit tunnel on the outside of the subunit, while an extended beta-hairpin is found that lines the wall of the exit tunnel in the center of the 70S ribosome. This is Large ribosomal subunit protein uL22 from Oceanobacillus iheyensis (strain DSM 14371 / CIP 107618 / JCM 11309 / KCTC 3954 / HTE831).